The primary structure comprises 130 residues: Holo-[acyl-carrier-protein] synthase (130 aa).

Positions 9 and 58 each coordinate Mg(2+).

It belongs to the P-Pant transferase superfamily. AcpS family. Mg(2+) is required as a cofactor.

The protein localises to the cytoplasm. It catalyses the reaction apo-[ACP] + CoA = holo-[ACP] + adenosine 3',5'-bisphosphate + H(+). Transfers the 4'-phosphopantetheine moiety from coenzyme A to a Ser of acyl-carrier-protein. This chain is Holo-[acyl-carrier-protein] synthase, found in Mycobacterium marinum (strain ATCC BAA-535 / M).